The primary structure comprises 336 residues: UDP-N-acetylenolpyruvoylglucosamine reductase (336 aa).

One can recognise an FAD-binding PCMH-type domain in the interval 1–178 (MAHSLQTLHT…TTVHLALPKE (178 aa)). R154 is an active-site residue. The active-site Proton donor is S222. E318 is an active-site residue.

The protein belongs to the MurB family. It depends on FAD as a cofactor.

The protein localises to the cytoplasm. The enzyme catalyses UDP-N-acetyl-alpha-D-muramate + NADP(+) = UDP-N-acetyl-3-O-(1-carboxyvinyl)-alpha-D-glucosamine + NADPH + H(+). It participates in cell wall biogenesis; peptidoglycan biosynthesis. Cell wall formation. In Pseudoalteromonas translucida (strain TAC 125), this protein is UDP-N-acetylenolpyruvoylglucosamine reductase.